The primary structure comprises 66 residues: Large ribosomal subunit protein bL31 (66 aa).

Residues C16, C18, C36, and C39 each contribute to the Zn(2+) site.

The protein belongs to the bacterial ribosomal protein bL31 family. Type A subfamily. Part of the 50S ribosomal subunit. The cofactor is Zn(2+).

Binds the 23S rRNA. This is Large ribosomal subunit protein bL31 from Trichlorobacter lovleyi (strain ATCC BAA-1151 / DSM 17278 / SZ) (Geobacter lovleyi).